A 312-amino-acid chain; its full sequence is Olfactory receptor 6C1 (312 aa).

Over M1–V23 the chain is Extracellular. N-linked (GlcNAc...) asparagine glycosylation occurs at N3. Residues V24–I44 traverse the membrane as a helical segment. Residues T45–H52 lie on the Cytoplasmic side of the membrane. A helical transmembrane segment spans residues L53–T73. Residues V74–V97 lie on the Extracellular side of the membrane. A disulfide bond links C95 and C187. A helical membrane pass occupies residues Q98 to Y118. Residues D119–R137 lie on the Cytoplasmic side of the membrane. A helical transmembrane segment spans residues V138–L158. Residues M159 to V195 are Extracellular-facing. Residues M196 to S215 form a helical membrane-spanning segment. At Y216–A235 the chain is on the cytoplasmic side. Residues F236–M256 form a helical membrane-spanning segment. Topologically, residues Y257–S269 are extracellular. A helical transmembrane segment spans residues K270–L290. The Cytoplasmic segment spans residues R291–T312.

This sequence belongs to the G-protein coupled receptor 1 family.

It localises to the cell membrane. Its function is as follows. Odorant receptor. This chain is Olfactory receptor 6C1 (OR6C1), found in Homo sapiens (Human).